Here is an 834-residue protein sequence, read N- to C-terminus: Enhancer of filamentation 1 (834 aa).

The tract at residues Met-1 to Asp-505 is required for interaction with ITCH. Residues Tyr-3–Gly-65 form the SH3 domain. Phosphotyrosine; by ABL1 occurs at positions 92, 164, 166, 177, 189, 214, and 223. Residues Arg-102–Ala-229 form an interacts strongly with spindle-regulatory protein D1M1 region. The segment at Glu-238–Val-260 is disordered. Position 279 is a phosphotyrosine; by ABL1 (Tyr-279). The segment at Ala-291–Ala-316 is disordered. Ser-296 is subject to Phosphoserine. Positions Leu-306–Asp-315 are enriched in polar residues. Tyr-317 carries the phosphotyrosine; by ABL1 modification. Disordered regions lie at residues Pro-328–Gln-398 and Gly-560–Arg-623. Positions Thr-332–Val-344 are enriched in basic and acidic residues. An interacts with CTTN region spans residues Asn-351 to Phe-834. Positions Asp-360–Asp-363 match the Caspase cleavage related site motif. A Phosphoserine modification is found at Ser-369. The span at Ser-369–Ser-395 shows a compositional bias: low complexity. Residues Phe-710–Gly-760 are divergent helix-loop-helix motif. The interval Phe-710–Phe-834 is required for interaction with PLK1. At Ser-780 the chain carries Phosphoserine; by CSNK1D and CSNK1E. Thr-804 is modified (phosphothreonine; by CSNK1E).

It belongs to the CAS family. In terms of assembly, homodimer. Forms heterodimers with BCAR1/p130cas. Forms complexes with PTK2B/RAFTK, adapter protein CRKL and LYN kinase. Part of a complex composed of NEDD9, AURKA and CTTN; within the complex NEDD9 acts as a scaffold protein and is required for complex formation. Part of a ternary complex composed of SMAD3, ITCH/AIP4 and NEDD9/HEF1; within the complex NEDD9/HEF1 interacts (via N-terminus) with ITCH/AIP4 (via WW domains); the complex mediates ubiquitination and proteasomal degradation of NEDD9/HEF1. Interacts with SMAD3; the interaction promotes NEDD9 ubiquitination and proteasomal degradation. Interacts with ID2. Interacts with CTTN (via N-terminus). Interacts with MICAL. Interacts with TXNL4/DIM1. Interacts with BCAR3 (via Ras-GEF domain). Interacts with SH2D3C isoform 1 and isoform 2. Interacts with ECT2. Interacts with PTPN11/SHP-2 (via SH2 domains); the interaction is enhanced when NEDD9/CAS-L is tyrosine phosphorylated. Interacts (via C-terminus) with PLK1 (via polo box domains). Interacts with NKX2-5. Interacts with SMAD3; the interaction is inhibited by oxidation of NEDD9. Interacts with NEDD9/HEF1; interaction is induced by CXCL12 promotion of ABL-mediated phosphorylation of NEDD9/HEF1. Interacts (via SH3 domain) with PTK2/FAK. Interacts with FYN; in the presence of PTK2. Interacts with INPPL1/SHIP2. Cell cycle-regulated processing produces four isoforms: p115, p105, p65, and p55. Isoform p115 arises from p105 phosphorylation and appears later in the cell cycle. Isoform p55 arises from p105 as a result of cleavage at a caspase cleavage-related site and it appears specifically at mitosis. The p65 isoform is poorly detected. In terms of processing, polyubiquitinated by ITCH/AIP4, leading to proteasomal degradation. Post-translationally, PTK2/FAK1 phosphorylates the protein at the YDYVHL motif (conserved among all cas proteins) following integrin stimulation. The SRC family kinases (FYN, SRC, LCK and CRK) are recruited to the phosphorylated sites and can phosphorylate other tyrosine residues. Ligation of either integrin beta-1 or B-cell antigen receptor on tonsillar B-cells and B-cell lines promotes tyrosine phosphorylation and both integrin and BCR-mediated tyrosine phosphorylation requires an intact actin network. Phosphorylation is required to recruit NEDD9 to T-cell receptor microclusters at the periphery of newly formed immunological synapses. In fibroblasts transformation with oncogene v-ABL results in an increase in tyrosine phosphorylation. Transiently phosphorylated following CD3 cross-linking and this phosphorylated form binds to CRKL and C3G. A mutant lacking the SH3 domain is phosphorylated upon CD3 cross-linking but not upon integrin beta-1 cross-linking. Tyrosine phosphorylation occurs upon stimulation of the G-protein coupled C1a calcitonin receptor. Calcitonin-stimulated tyrosine phosphorylation is mediated by calcium- and protein kinase C-dependent mechanisms and requires the integrity of the actin cytoskeleton. Phosphorylation at Ser-369 induces proteasomal degradation. Phosphorylated by LYN. Phosphorylation at Ser-780 by CSNK1D or CSNK1E, or phosphorylation of Thr-804 by CSNK1E enhances the interaction of NEDD9 with PLK1. Expressed in B-cells (at protein level). Expressed in the respiratory epithelium of the main bronchi to the bronchioles in the lungs (at protein level). High levels detected in kidney, lung, and placenta. Expressed in lymphocytes.

The protein localises to the cytoplasm. It localises to the cell cortex. The protein resides in the nucleus. Its subcellular location is the golgi apparatus. It is found in the cell projection. The protein localises to the lamellipodium. It localises to the cell junction. The protein resides in the focal adhesion. Its subcellular location is the cytoskeleton. It is found in the spindle pole. The protein localises to the cilium. It localises to the cilium basal body. The protein resides in the basolateral cell membrane. Its subcellular location is the spindle. Functionally, scaffolding protein which plays a central coordinating role for tyrosine-kinase-based signaling related to cell adhesion. As a focal adhesion protein, plays a role in embryonic fibroblast migration. May play an important role in integrin beta-1 or B cell antigen receptor (BCR) mediated signaling in B- and T-cells. Integrin beta-1 stimulation leads to recruitment of various proteins including CRKL and SHPTP2 to the tyrosine phosphorylated form. Promotes adhesion and migration of lymphocytes; as a result required for the correct migration of lymphocytes to the spleen and other secondary lymphoid organs. Plays a role in the organization of T-cell F-actin cortical cytoskeleton and the centralization of T-cell receptor microclusters at the immunological synapse. Negatively regulates cilia outgrowth in polarized cysts. Modulates cilia disassembly via activation of AURKA-mediated phosphorylation of HDAC6 and subsequent deacetylation of alpha-tubulin. Positively regulates RANKL-induced osteoclastogenesis. Required for the maintenance of hippocampal dendritic spines in the dentate gyrus and CA1 regions, thereby involved in spatial learning and memory. The polypeptide is Enhancer of filamentation 1 (Homo sapiens (Human)).